Consider the following 470-residue polypeptide: 3-isopropylmalate dehydratase large subunit (470 aa).

Cys-349, Cys-410, and Cys-413 together coordinate [4Fe-4S] cluster.

This sequence belongs to the aconitase/IPM isomerase family. LeuC type 1 subfamily. Heterodimer of LeuC and LeuD. It depends on [4Fe-4S] cluster as a cofactor.

It carries out the reaction (2R,3S)-3-isopropylmalate = (2S)-2-isopropylmalate. The protein operates within amino-acid biosynthesis; L-leucine biosynthesis; L-leucine from 3-methyl-2-oxobutanoate: step 2/4. In terms of biological role, catalyzes the isomerization between 2-isopropylmalate and 3-isopropylmalate, via the formation of 2-isopropylmaleate. This chain is 3-isopropylmalate dehydratase large subunit, found in Nitrosomonas europaea (strain ATCC 19718 / CIP 103999 / KCTC 2705 / NBRC 14298).